Reading from the N-terminus, the 338-residue chain is MNFKVCSFPSRRQSIAAFVRVLMVILLTLGALVSSDVLLPQPAAAYPFWAQQNYANPREATGRIVCANCHLAAKPAEIEVPQAVLPDSVFKAVVKIPYDHSVQQVQADGSKGPLNVGAVLMLPEGFTIAPEDRIPEEMKEEVGPSYLFQPYADDKQNIVLVGPLPGDQYEEIVFPVLSPNPATNKSVAFGKYSIHLGANRGRGQIYPTGEKSNNAVYNASAAGVITAIAKADDGSAEVKIRTEDGTTIVDKIPAGPELIVSEGEEVAAGAALTNNPNVGGFGQKDTEIVLQSPNRVKGRIAFLAAITLTQILLVLKKKQVERVQAGRDDLLKAAFIAG.

Positions Met-1–Ala-45 are cleaved as a signal peptide. Tyr-46, Cys-66, Cys-69, and His-70 together coordinate heme. Residues Ile-300–Lys-316 form a helical membrane-spanning segment.

This sequence belongs to the cytochrome f family. In terms of assembly, the 4 large subunits of the cytochrome b6-f complex are cytochrome b6, subunit IV (17 kDa polypeptide, PetD), cytochrome f and the Rieske protein, while the 4 small subunits are PetG, PetL, PetM and PetN. The complex functions as a dimer. It depends on heme as a cofactor.

It localises to the cellular thylakoid membrane. Component of the cytochrome b6-f complex, which mediates electron transfer between photosystem II (PSII) and photosystem I (PSI), cyclic electron flow around PSI, and state transitions. The sequence is that of Cytochrome f (petA) from Leptolyngbya laminosa (Phormidium laminosum).